The primary structure comprises 200 residues: dITP/XTP pyrophosphatase (200 aa).

7 to 12 (SNNYHK) lines the substrate pocket. Asp-68 functions as the Proton acceptor in the catalytic mechanism. Residue Asp-68 participates in Mg(2+) binding. Residues Ser-69, 147–150 (FGYD), Lys-170, and 175–176 (HR) each bind substrate.

Belongs to the HAM1 NTPase family. In terms of assembly, homodimer. Requires Mg(2+) as cofactor.

The catalysed reaction is XTP + H2O = XMP + diphosphate + H(+). The enzyme catalyses dITP + H2O = dIMP + diphosphate + H(+). It carries out the reaction ITP + H2O = IMP + diphosphate + H(+). Functionally, pyrophosphatase that catalyzes the hydrolysis of nucleoside triphosphates to their monophosphate derivatives, with a high preference for the non-canonical purine nucleotides XTP (xanthosine triphosphate), dITP (deoxyinosine triphosphate) and ITP. Seems to function as a house-cleaning enzyme that removes non-canonical purine nucleotides from the nucleotide pool, thus preventing their incorporation into DNA/RNA and avoiding chromosomal lesions. This chain is dITP/XTP pyrophosphatase, found in Acholeplasma laidlawii (strain PG-8A).